The primary structure comprises 406 residues: Argininosuccinate synthase (406 aa).

Residues 12–20 (AYSGGLDTS) and Ala39 each bind ATP. L-citrulline-binding residues include Tyr90 and Ser95. Gly120 serves as a coordination point for ATP. Residues Thr122, Asn126, and Asp127 each coordinate L-aspartate. Residue Asn126 coordinates L-citrulline. Positions 130, 179, 188, 264, and 276 each coordinate L-citrulline.

It belongs to the argininosuccinate synthase family. Type 1 subfamily. Homotetramer.

It localises to the cytoplasm. It catalyses the reaction L-citrulline + L-aspartate + ATP = 2-(N(omega)-L-arginino)succinate + AMP + diphosphate + H(+). It functions in the pathway amino-acid biosynthesis; L-arginine biosynthesis; L-arginine from L-ornithine and carbamoyl phosphate: step 2/3. In Geotalea uraniireducens (strain Rf4) (Geobacter uraniireducens), this protein is Argininosuccinate synthase.